A 291-amino-acid polypeptide reads, in one-letter code: Phosphatidylglycerol--prolipoprotein diacylglyceryl transferase (291 aa).

The next 4 membrane-spanning stretches (helical) occupy residues 24–44, 64–84, 99–119, and 125–145; these read WYAL…RALL, FILW…VLFY, IWKG…AVIL, and GLPI…GLFL. Position 147 (Arg147) interacts with a 1,2-diacyl-sn-glycero-3-phospho-(1'-sn-glycerol). The next 3 membrane-spanning stretches (helical) occupy residues 187-207, 211-231, and 247-267; these read ATLE…AGAL, GLVL…GEFF, and MGML…CVAW.

The protein belongs to the Lgt family.

It is found in the cell inner membrane. The enzyme catalyses L-cysteinyl-[prolipoprotein] + a 1,2-diacyl-sn-glycero-3-phospho-(1'-sn-glycerol) = an S-1,2-diacyl-sn-glyceryl-L-cysteinyl-[prolipoprotein] + sn-glycerol 1-phosphate + H(+). Its pathway is protein modification; lipoprotein biosynthesis (diacylglyceryl transfer). Functionally, catalyzes the transfer of the diacylglyceryl group from phosphatidylglycerol to the sulfhydryl group of the N-terminal cysteine of a prolipoprotein, the first step in the formation of mature lipoproteins. In Nitrobacter hamburgensis (strain DSM 10229 / NCIMB 13809 / X14), this protein is Phosphatidylglycerol--prolipoprotein diacylglyceryl transferase.